A 731-amino-acid chain; its full sequence is MIRAPLVKALGALGSPTHQMASRAVRTSAMVAQTPAKAPEKIEVFVDDIPVQVVPGTTVLQAAAQIGVEIPRFCYHERLAVAGNCRMCLVEVEKSPKPVAACAMPVMKGWRIKTNSDLTRKAREGVMEFLLMNHPLDCPICDQGGECDLQDQAMAFGSDRSRFTDINYTGKRAVEDKDIGPLVKTIMTRCIHCTRCVRFASEIAGVDDLGTTGRGNDMQIGTYVEKLFLTELSGNVIDLCPVGALTNKPYSFVARPWEIRKVSSIDVLDAVGSNIVVSTRTNEVLRILPRENEDVNEEWLADKSRFACDGLKRQRLVAPMVRMPNGELQAVEWEGALIAVAKAIKAAGGQIAGISGQLADLEAQVALKDLLNRLGSEVVATEQGFIAGGTDNRANYLLNSTIAGLEEADAVLLVGTNPRYEAPLVNTRLRKAYVHNELQIASIGPKIDLSYDHENLGADAALVKDVCSGAHAFSKVLEGAKKPAIIIGADLLERADGAAIHATVAEYCKKLKKPNWNPFNVLQTNAAQVGALDVGYKAGAQTAVKAQPKVLFLLNADAGKVTREQLPKDCFVVYIGSHGDNGASIADAVLPGAAYTEKQGIYVNTEGRPQQTLPGVSPPGMAREDWKILRALSEVVGKPLPYDNLDELRNRLEDVAPHLTRLGQLEPAGDAGAAGTISKSIGGGAIDIKLKELRDYFMTDAISRASPTMAKCISAVNKQQRENEAKQSVAI.

Residues methionine 1–threonine 27 constitute a mitochondrion transit peptide. In terms of domain architecture, 2Fe-2S ferredoxin-type spans glutamate 40–leucine 118. [2Fe-2S] cluster contacts are provided by cysteine 74, cysteine 85, cysteine 88, and cysteine 102. Residues leucine 118–glycine 157 enclose the 4Fe-4S His(Cys)3-ligated-type domain. The [4Fe-4S] cluster site is built by histidine 134, cysteine 138, cysteine 141, cysteine 147, cysteine 190, cysteine 193, cysteine 196, and cysteine 240. A 4Fe-4S Mo/W bis-MGD-type domain is found at isoleucine 259–arginine 315.

This sequence belongs to the complex I 75 kDa subunit family. Complex I is composed of about 45 different subunits. [2Fe-2S] cluster is required as a cofactor. The cofactor is [4Fe-4S] cluster.

The protein localises to the mitochondrion inner membrane. The catalysed reaction is a ubiquinone + NADH + 5 H(+)(in) = a ubiquinol + NAD(+) + 4 H(+)(out). Its function is as follows. Core subunit of the mitochondrial membrane respiratory chain NADH dehydrogenase (Complex I) that is believed to belong to the minimal assembly required for catalysis. Complex I functions in the transfer of electrons from NADH to the respiratory chain. The immediate electron acceptor for the enzyme is believed to be ubiquinone. This is the largest subunit of complex I and it is a component of the iron-sulfur (IP) fragment of the enzyme. It may form part of the active site crevice where NADH is oxidized. In Drosophila melanogaster (Fruit fly), this protein is NADH-ubiquinone oxidoreductase 75 kDa subunit, mitochondrial.